Consider the following 500-residue polypeptide: Na(+)/H(+) antiporter NhaB (500 aa).

11 helical membrane passes run V23–A43, I53–I73, V96–F116, A129–L149, T150–A170, L205–P225, F238–V258, I311–I331, F350–I370, A450–I470, and M477–T497.

Belongs to the NhaB Na(+)/H(+) (TC 2.A.34) antiporter family.

Its subcellular location is the cell inner membrane. It carries out the reaction 2 Na(+)(in) + 3 H(+)(out) = 2 Na(+)(out) + 3 H(+)(in). Functionally, na(+)/H(+) antiporter that extrudes sodium in exchange for external protons. The polypeptide is Na(+)/H(+) antiporter NhaB (Pseudomonas putida (strain ATCC 47054 / DSM 6125 / CFBP 8728 / NCIMB 11950 / KT2440)).